Reading from the N-terminus, the 319-residue chain is uncharacterized protein (319 aa).

A helical transmembrane segment spans residues 270–290; the sequence is AAALWWIPAWLAMIVEVAVLG.

The protein localises to the membrane. This is an uncharacterized protein from Mycobacterium tuberculosis (strain CDC 1551 / Oshkosh).